Consider the following 321-residue polypeptide: Olfactory receptor 52N4 (321 aa).

Over 1 to 27 (MLTLNKTDLIPASFILNGVPGLEDTQL) the chain is Extracellular. Asn5 carries an N-linked (GlcNAc...) asparagine glycan. Residues 28-48 (WISFPFCSMYVVAMVGNCGLL) form a helical membrane-spanning segment. The Cytoplasmic portion of the chain corresponds to 49–56 (YLIHYEDA). Residues 57–77 (LHKPMYYFLAMLSFTDLVMCS) traverse the membrane as a helical segment. At 78–101 (STIPKALCIFWFHLKDIGFDECLV) the chain is on the extracellular side. A disulfide bridge links Cys99 with Cys191. Residues 102–122 (QMFFTHTFTGMESGVLMLMAL) form a helical membrane-spanning segment. Residues 123–141 (DRYVAICYPLRYSTILTNP) lie on the Cytoplasmic side of the membrane. Residues 142–162 (VIAKVGTATFLRGVLLIIPFT) form a helical membrane-spanning segment. Residues 163-198 (FLTKLLPYCRGNILPHTYCDHMSVAKLSCGNVKVNA) are Extracellular-facing. A helical membrane pass occupies residues 199–219 (IYGLMVALLIWGFDILCITNS). The Cytoplasmic segment spans residues 220–239 (YTMILRAVVSLSSADARQKA). A helical transmembrane segment spans residues 240-260 (FNTCTAHICAIVFSYTPAFFS). Residues 261 to 276 (FFSHRFGEHIIPPSCH) lie on the Extracellular side of the membrane. The helical transmembrane segment at 277-297 (IIVANIYLLLPPTMNPIVYGV) threads the bilayer. At 298–321 (KTKQIRDCVIRILSGSKDTKSYSM) the chain is on the cytoplasmic side.

The protein belongs to the G-protein coupled receptor 1 family.

The protein localises to the cell membrane. Odorant receptor. The chain is Olfactory receptor 52N4 (OR52N4) from Homo sapiens (Human).